We begin with the raw amino-acid sequence, 242 residues long: tRNA pseudouridine synthase A (242 aa).

Asp51 acts as the Nucleophile in catalysis. Tyr107 contributes to the substrate binding site.

It belongs to the tRNA pseudouridine synthase TruA family. As to quaternary structure, homodimer.

It carries out the reaction uridine(38/39/40) in tRNA = pseudouridine(38/39/40) in tRNA. Functionally, formation of pseudouridine at positions 38, 39 and 40 in the anticodon stem and loop of transfer RNAs. The protein is tRNA pseudouridine synthase A of Helicobacter pylori (strain Shi470).